The primary structure comprises 308 residues: Ribosomal RNA large subunit methyltransferase F (308 aa).

This sequence belongs to the methyltransferase superfamily. METTL16/RlmF family.

It is found in the cytoplasm. The catalysed reaction is adenosine(1618) in 23S rRNA + S-adenosyl-L-methionine = N(6)-methyladenosine(1618) in 23S rRNA + S-adenosyl-L-homocysteine + H(+). Functionally, specifically methylates the adenine in position 1618 of 23S rRNA. The polypeptide is Ribosomal RNA large subunit methyltransferase F (Salmonella dublin (strain CT_02021853)).